A 701-amino-acid polypeptide reads, in one-letter code: F-box/LRR-repeat protein 17 (701 aa).

3 disordered regions span residues 73-93 (SAGL…RDGA), 227-250 (GGGG…CQAP), and 279-321 (VRAG…IPDI). The segment covering 81 to 90 (PLSPPPPPPR) has biased composition (pro residues). Positions 227-236 (GGGGPAGGGA) are enriched in gly residues. A compositionally biased stretch (polar residues) spans 285–294 (APSSAQQQPE). An F-box domain is found at 318-365 (IPDINQLPPSILLKIFSNLSLNERCLSASLVCKYWRDLCLDFQFWKQL).

This sequence belongs to the FBXL17 family. As to quaternary structure, part of the SCF (SKP1-CUL1-F-box) E3 ubiquitin-protein ligase complex SCF(FBXL17) composed of CUL1, SKP1, RBX1 and FBXL17. Interacts with BTB domain-containing proteins such as KLHL12, BCL6 and BACH1; specifically recognizes and binds a conserved degron of non-consecutive residues present at the interface of BTB dimers of aberrant composition. Interacts with SUFU. Interacts with PRMT1.

It is found in the cytoplasm. The protein resides in the nucleus. In terms of biological role, substrate-recognition component of the SCF(FBXL17) E3 ubiquitin ligase complex, a key component of a quality control pathway required to ensure functional dimerization of BTB domain-containing proteins (dimerization quality control, DQC). FBXL17 specifically recognizes and binds a conserved degron of non-consecutive residues present at the interface of BTB dimers of aberrant composition: aberrant BTB dimer are then ubiquitinated by the SCF(FBXL17) complex and degraded by the proteasome. The ability of the SCF(FBXL17) complex to eliminate compromised BTB dimers is required for the differentiation and survival of neural crest and neuronal cells. The SCF(FBXL17) complex mediates ubiquitination and degradation of BACH1. The SCF(FBXL17) complex is also involved in the regulation of the hedgehog/smoothened (Hh) signaling pathway by mediating the ubiquitination and degradation of SUFU, allowing the release of GLI1 from SUFU for proper Hh signal transduction. The SCF(FBXL17) complex mediates ubiquitination and degradation of PRMT1. The polypeptide is F-box/LRR-repeat protein 17 (Mus musculus (Mouse)).